We begin with the raw amino-acid sequence, 397 residues long: Tryptophan synthase beta chain (397 aa).

Lys-91 is modified (N6-(pyridoxal phosphate)lysine).

Belongs to the TrpB family. As to quaternary structure, tetramer of two alpha and two beta chains. Pyridoxal 5'-phosphate is required as a cofactor.

The enzyme catalyses (1S,2R)-1-C-(indol-3-yl)glycerol 3-phosphate + L-serine = D-glyceraldehyde 3-phosphate + L-tryptophan + H2O. Its pathway is amino-acid biosynthesis; L-tryptophan biosynthesis; L-tryptophan from chorismate: step 5/5. Its function is as follows. The beta subunit is responsible for the synthesis of L-tryptophan from indole and L-serine. This chain is Tryptophan synthase beta chain, found in Bacillus cereus (strain ATCC 14579 / DSM 31 / CCUG 7414 / JCM 2152 / NBRC 15305 / NCIMB 9373 / NCTC 2599 / NRRL B-3711).